Here is a 300-residue protein sequence, read N- to C-terminus: MTEVALSLDVSRFLRYLGVERQLSPITLQNYQRQLDAIIALAGETGLKSWQQCDAAIVRSFAVRSRRKGLGPASLALRLSALRSFFDWLVSQGELKANPAKGVSAPKAPRHLPKNIDVDDVNRLLDIDLNDPLAVRDRAMLEVMYGAGLRLSELVGLDIKHLDLDTGEVWVMGKGSKERRLPIGRNAVTWIEHWLDLRGLFASDEEALFLSKLGKRISARNVQKRFAEWGIKQGLNSHVHPHKLRHSFATHMLESSGDLRGVQELLGHANLSTTQIYTHLDFQHLASVYDAAHPRAKRGK.

Residues 4–90 enclose the Core-binding (CB) domain; it reads VALSLDVSRF…ALRSFFDWLV (87 aa). One can recognise a Tyr recombinase domain in the interval 111 to 290; that stretch reads HLPKNIDVDD…DFQHLASVYD (180 aa). Catalysis depends on residues arginine 150, lysine 174, histidine 242, arginine 245, and histidine 268. Tyrosine 277 acts as the O-(3'-phospho-DNA)-tyrosine intermediate in catalysis.

Belongs to the 'phage' integrase family. XerC subfamily. As to quaternary structure, forms a cyclic heterotetrameric complex composed of two molecules of XerC and two molecules of XerD, in which XerC interacts with XerD via its C-terminal region, XerD interacts with XerC via its C-terminal region and so on.

The protein localises to the cytoplasm. FtsK may regulate the catalytic switch between XerC and XerD in the heterotetrameric complex during the two steps of the recombination process. Functionally, site-specific tyrosine recombinase, which acts by catalyzing the cutting and rejoining of the recombining DNA molecules. Binds cooperatively to specific DNA consensus sequences that are separated from XerD binding sites by a short central region, forming the heterotetrameric XerC-XerD complex that recombines DNA substrates. The complex is essential to convert dimers of the bacterial chromosome into monomers to permit their segregation at cell division. It also contributes to the segregational stability of plasmids. In the complex XerC specifically exchanges the top DNA strands. In Salmonella typhi, this protein is Tyrosine recombinase XerC.